Consider the following 280-residue polypeptide: Cis-2,3-dihydrobiphenyl-2,3-diol dehydrogenase (280 aa).

9–33 lines the NAD(+) pocket; the sequence is LVTGGCAGLGRAIVDRFVCEGARVA. Ser-142 serves as a coordination point for substrate. Catalysis depends on Tyr-155, which acts as the Proton acceptor.

The protein belongs to the short-chain dehydrogenases/reductases (SDR) family.

The catalysed reaction is (2R,3S)-3-phenylcyclohexa-3,5-diene-1,2-diol + NAD(+) = biphenyl-2,3-diol + NADH + H(+). Its pathway is xenobiotic degradation; biphenyl degradation; 2-hydroxy-2,4-pentadienoate and benzoate from biphenyl: step 2/4. This is Cis-2,3-dihydrobiphenyl-2,3-diol dehydrogenase (bphB) from Rhodococcus globerulus.